We begin with the raw amino-acid sequence, 688 residues long: Polyribonucleotide nucleotidyltransferase (688 aa).

Residues Asp484 and Asp490 each coordinate Mg(2+). A KH domain is found at 550–609 (PTTEIFNVAPDKIVEIIGQGGRVIKEIVEKFEVKIDLNKPSGEVKIMGNKERVLKTKEFI). The region spanning 626–688 (DEVLEAQVKR…NKGKIALDLA (63 aa)) is the S1 motif domain.

The protein belongs to the polyribonucleotide nucleotidyltransferase family. The cofactor is Mg(2+).

The protein localises to the cytoplasm. The catalysed reaction is RNA(n+1) + phosphate = RNA(n) + a ribonucleoside 5'-diphosphate. In terms of biological role, involved in mRNA degradation. Catalyzes the phosphorolysis of single-stranded polyribonucleotides processively in the 3'- to 5'-direction. In Helicobacter pylori (strain HPAG1), this protein is Polyribonucleotide nucleotidyltransferase.